Reading from the N-terminus, the 521-residue chain is Melanopsin (521 aa).

Over 1 to 71 (MDSPSGPRVL…VDVPDHAHYT (71 aa)) the chain is Extracellular. N-linked (GlcNAc...) asparagine glycosylation is found at Asn-30 and Asn-34. Residues 72–92 (LGTVILLVGLTGMLGNLTVIY) traverse the membrane as a helical segment. The Cytoplasmic portion of the chain corresponds to 93-106 (TFCRNRGLRTPANM). The chain crosses the membrane as a helical span at residues 107–127 (FIINLAVSDFLMSVTQAPVFF). Residues 128 to 143 (ASSLYKKWLFGETGCE) lie on the Extracellular side of the membrane. A disulfide bridge connects residues Cys-142 and Cys-220. The helical transmembrane segment at 144 to 164 (FYAFCGAVFGITSMITLTAIA) threads the bilayer. The Cytoplasmic segment spans residues 165–187 (MDRYLVITRPLATIGRGSKRRTA). Residues 188-208 (LVLLGVWLYALAWSLPPFFGW) traverse the membrane as a helical segment. The Extracellular segment spans residues 209–237 (SAYVPEGLLTSCSWDYMTFTPQVRAYTML). The helical transmembrane segment at 238–258 (LFCFVFFLPLLIIIFCYIFIF) threads the bilayer. At 259–293 (RAIRETGRACEGCGESPLRQRRQWQRLQSEWKMAK) the chain is on the cytoplasmic side. The helical transmembrane segment at 294 to 314 (VALIVILLFVLSWAPYSTVAL) threads the bilayer. Residues 315-329 (VAFAGYSHILTPYMS) are Extracellular-facing. A helical transmembrane segment spans residues 330–350 (SVPAVIAKASAIHNPIIYAIT). The residue at position 337 (Lys-337) is an N6-(retinylidene)lysine. Residues 351-521 (HPKYRVAIAQ…LEDDVTLRHL (171 aa)) are Cytoplasmic-facing. The segment at 445–486 (GELKASSSPQVQRSKTPKVPGPSTCRPMKGQGARPSSLRGDQ) is disordered. Polar residues predominate over residues 449–458 (ASSSPQVQRS).

It belongs to the G-protein coupled receptor 1 family. Opsin subfamily. As to expression, expressed in the retinal pigment epithelium and ganglion cell layer (at protein level). Also expressed in amacrine cell layers of the retina. Weakly expressed in vibrissae, and tail. Observed with processes in the outer strata of inner plexiform layer (IPL) close to the inner nuclear layer (INL) or is found to be bistratified with processes located both in the inner (ON) or outer (OFF) layers of the IPL (at protein level). A second population of isoform 1 is identified in processes which are confined to the inner layer of the IPL near to the ganglion cell layer (GCL) (at protein level). In terms of tissue distribution, about 40 times more abundant than isoform 1 in the retina (at protein level). Isoform 2 is involved in processes localized to the outer IPL or is bistratified with processes in both the inner and outer layers of the IPL (at protein level). Isoform 2 is absent in the processes confined only to the inner layer of the IPL (at protein level).

The protein localises to the cell membrane. Its subcellular location is the cell projection. It is found in the axon. It localises to the dendrite. The protein resides in the perikaryon. Its function is as follows. Photoreceptor that binds cis-retinaldehydes. Contributes to pupillar reflex, photoentrainment and other non-image forming responses to light. May be involved in the optokinetic visual tracking response. May be involved in the regulation of retinal hyaloid vessel growth and regression. The sequence is that of Melanopsin (Opn4) from Mus musculus (Mouse).